A 1598-amino-acid polypeptide reads, in one-letter code: MSSRRSVKRSLVLDDDDDEDIFYNFKVLLPNGTSVKLTLKNPEPEISMQSFVNLVKKEYDNARKDCLLMSKRMKVDWNSGGKFHLESNGGKMKGIVRFAAFKPDLCHIIRLDDGSGIASTMYENLWDLTPDTDLLKELPENYSFETALADLIDNSLQAVWPYREGARKLISVDISGDHITVFDTGRGMDSSEGNSIDKWGKIGASLHRSQKTGAIGGNPPYLKPYFGMFGYGGPYASMFLGRCDFSFCLPILICIVLLRLTLFSVRRTLVSSKTKESKKVFTLQFKKEALIDNRSIVGKNWKTDGGMRDPSEEEMKLSPHGSFTKVEIFESEFDISKIYQLQCRLKDIYFPYIQFCLATIFLCDELSKTGRTERPVAFQVNGEDLAEIAGGEVAITNLHSKGQFFSFQIRFTLFGGKRKGTAQEANARLKFVYFPIVQGKESIEKILQSLEEEGCKVSESFQTFGRVSLRRLGRLLPEVRWDSIPFMQRGNRASTLQKSCRRVKCFVDLDAGFSPTPSKTDLASQNPFSVALRNFGSKSTEKEKDDDVNIVIHREGKSVSYAHLEEKYQEWVLEMHNTHDEEAASGLDEAVLIVGSLDKKALGILRDAVRVHKEVRRKEKTWKRGQNIKILRGAYAGIHNNNVYATIDYFLIEGFEDEAGGDTRILCRPIDRPENEGCKLSIIDGISKLEVQSSLSLPITIIDSGKCLPVDANEWNRKLDKQQEKAPSKIDLLDERDCRELKIDGELPIGNSVRAGKAPPKQIVAVVRPACFTSLTPSKKLDQKNIVKMDGEEMVMVVKLKSSDKNISSQRLFPTSRKGISGLYIFSLGSKFPNLFKKAGTYNFSFSIGNSIKCNKTVVVRPSSKAARWELDDNLESLPCNVRVGSSLPPFRIACFDKYKNKIPFTSVPSLEVELEASPGFLIKIDKLETNLINDGLILKIENMLVETDELDQIRPNYEATLEIRAMDNPFSVSVPCKVNPGPLKRVAVNNPKALENLLPDSTVEDFILELFDGYNNHVAEGTDVLIHIDGYRIEDWMGINRKVDSRGCINLSGILKVTEGYGKSVSLSVMSGNEVIFCKESQIDERQLRLVTELPDCCTAGTNLMNLIFQVTELDGSLDTSIHHDEKSGCFHTMSIESDSSSVESAIRYAFVHGSCKVSSLSLPENEGVFSCRVFHSRYPELQMSIKIQVTSAPTSEREESGYSTPHSKTTPPPESGIPSITNPWPTPCSQFGVLAIRSSSLALSSETSLMDMAQYTEDLKEKINIDEERRVELEERLKCLQAQREHAEQECSRLQASLEPLGAPFPECLSTKESMMKQIEEKHHDTAASVFCCLYRKAPPPRSLFLSQKGMFGVVALLGSVASTSLSRVLSEYLGKDTMLSLVCKSSQFGPKSDEYRKFQSEAASLGRSITNRFLVICLDATRPWRNGLVRNDPQKRLAMDNPYLPNGDPIPGFKGYAVNMIDLASEELDIQSSSGYGLRETLFYGVFRELQVYETAEHLEAALPHINGGDAVSLDGVIARENGFIYSGCCTPEVHFPITVTERQEKALVQLEITRDKKRKTEEMMTEENRSLRRLVKKLKKANEKYQNFTAMADS.

The segment at 1191–1218 (VTSAPTSEREESGYSTPHSKTTPPPESG) is disordered. 2 coiled-coil regions span residues 1258–1301 (TEDL…ASLE) and 1565–1595 (EEMM…FTAM).

Highly expressed in closed buds and open flowers. Expressed at low levels in roots, stems, cauline leaves and siliques. Expressed in the region of the shoot and floral meristems.

It localises to the nucleus. Functionally, contributes to DNA double-strand break (DSB) repair via somatic homologous recombination. Functions downstream of ATM. This is Structural maintenance of chromosomes flexible hinge domain-containing protein GMI1 from Arabidopsis thaliana (Mouse-ear cress).